Consider the following 33-residue polypeptide: Photosystem II reaction center protein T (33 aa).

A helical membrane pass occupies residues Ala-3 to Phe-23.

This sequence belongs to the PsbT family. As to quaternary structure, PSII is composed of 1 copy each of membrane proteins PsbA, PsbB, PsbC, PsbD, PsbE, PsbF, PsbH, PsbI, PsbJ, PsbK, PsbL, PsbM, PsbT, PsbY, PsbZ, Psb30/Ycf12, at least 3 peripheral proteins of the oxygen-evolving complex and a large number of cofactors. It forms dimeric complexes.

The protein localises to the plastid. It localises to the chloroplast thylakoid membrane. Found at the monomer-monomer interface of the photosystem II (PS II) dimer, plays a role in assembly and dimerization of PSII. PSII is a light-driven water plastoquinone oxidoreductase, using light energy to abstract electrons from H(2)O, generating a proton gradient subsequently used for ATP formation. The sequence is that of Photosystem II reaction center protein T from Pelargonium hortorum (Common geranium).